The following is a 276-amino-acid chain: Large ribosomal subunit protein uL2 (276 aa).

Residues 224–276 (VMNPVDHPHGGGEGKAPIGRKSPMTPWGKPTLGYKTRKKKNKSDKFIIRRRKK) form a disordered region. The span at 258–276 (KTRKKKNKSDKFIIRRRKK) shows a compositional bias: basic residues.

Belongs to the universal ribosomal protein uL2 family. Part of the 50S ribosomal subunit. Forms a bridge to the 30S subunit in the 70S ribosome.

In terms of biological role, one of the primary rRNA binding proteins. Required for association of the 30S and 50S subunits to form the 70S ribosome, for tRNA binding and peptide bond formation. It has been suggested to have peptidyltransferase activity; this is somewhat controversial. Makes several contacts with the 16S rRNA in the 70S ribosome. This chain is Large ribosomal subunit protein uL2, found in Geobacillus stearothermophilus (Bacillus stearothermophilus).